Consider the following 801-residue polypeptide: MPLVPLEHLDEVREELVKARKSRHRRLLVITGDDDSRLVTTALDFIYNVKDLLSGEKVLYTYHAFYSDGAMRKELFEKGVPRELSVDYVSYHKLDEVLGRTYAAAVADLVNNLEPNDLGRVMGVVEGGGLYIFLLPSFTRLLETVTRFQSNLIVPGYTDKDLKRYFEKRFIKKVMEHQGVAVYDADNRYWVKKFGKTPSTPYARPKPVLPQKSKIPVKVFNLALTQDQVEVLKIFEHFYAKAEKEKLVFVLTADRGRGKSSAVGLGVGWLAHRLRRAKGKCKVVVTAPAVTNVQEVFRFSAAVLDLFKHKVEVLEDESGMITKLLSKGIEIEYVTPLDVLKAKGDLLVVDEAASIPVPLLFKMLKRFNKVVYSSTIHGYEGAGRGFSLRFLKRLKNEEGVKLYEYEMSEPIRYAPEDPIEKWTFDLLLLDAEPCEITEDDLSLVSAGEVYYDAPNEEELFLKNEEELRQFFGIYIMAHYRNNPNDLGIMMDAPHHFLRMVRLKNGKIVVSLELASEGNLGEDLSKESAKGAWLMGNIIPDRLIKHYKILDFGNLRGIRVVRIATHPSVMGKGLGSFALSRLEEEARRNGYDWVGAGFGVTYELLKFWLKNGYIPVHMSPEKNPVSGEYTVIVVKPLSEKAKRIVDVIAKEFKQKLLGSLASPYFDLEPEVALLLLKSTPSFEVKVNLTKLQLARFLTYAWSDMTLENCIDVVGIMTRLYFLSKKKPSLSELQELLLVSKILQAKSWHLTCQELNLSLAEATSNMKQIAQIFSKEFLGVNSEEEALRYFFLRMDDLNEGVSA.

Residues Gln-228, 256-265 (GRGKSSAVGL), and Arg-412 contribute to the ATP site. An N-acetyltransferase domain is found at 457–637 (EELFLKNEEE…YTVIVVKPLS (181 aa)). Residues 562-564 (IAT), 569-575 (MGKGLGS), and Glu-602 contribute to the acetyl-CoA site.

The protein belongs to the RNA cytidine acetyltransferase family. TmcA subfamily.

It localises to the cytoplasm. It catalyses the reaction cytidine(34) in elongator tRNA(Met) + acetyl-CoA + ATP + H2O = N(4)-acetylcytidine(34) in elongator tRNA(Met) + ADP + phosphate + CoA + H(+). In terms of biological role, catalyzes the formation of N(4)-acetylcytidine (ac(4)C) at the wobble position of tRNA(Met), by using acetyl-CoA as an acetyl donor and ATP (or GTP). In Thermofilum pendens (strain DSM 2475 / Hrk 5), this protein is tRNA(Met) cytidine acetyltransferase TmcA.